A 566-amino-acid chain; its full sequence is Macrophage colony-stimulating factor 1 (566 aa).

The first 32 residues, Met1 to Ala32, serve as a signal peptide directing secretion. Topologically, residues Glu33–Ala508 are extracellular. N-linked (GlcNAc...) asparagine glycosylation is found at Asn106, Asn153, and Asn171. Disordered stretches follow at residues Pro197–Pro417 and Gly434–Arg484. Residues Pro253–Gln265 show a composition bias toward polar residues. Ser302 carries an O-linked (Xyl...) (chondroitin sulfate) serine glycan. Positions Asp348–Thr360 are enriched in polar residues. An N-linked (GlcNAc...) asparagine glycan is attached at Asn353. Thr355 and Thr357 each carry an O-linked (GalNAc...) threonine glycan. A compositionally biased stretch (basic and acidic residues) spans Glu377–Ser394. Over residues Leu400–Thr410 the composition is skewed to polar residues. Residues Gly434–Ala445 show a composition bias toward basic and acidic residues. The helical transmembrane segment at Phe509 to Trp531 threads the bilayer. Residues Lys532–Val566 are Cytoplasmic-facing. The tract at residues Asp538–Val566 is disordered. Over residues Asp557–Val566 the composition is skewed to basic and acidic residues.

In terms of assembly, homodimer or heterodimer; disulfide-linked. Likely to exist in multiple forms: homodimer consisting of 2 identical 150-200 kDa proteoglycan subunits, heterodimer consisting of a 150-200 kDa proteoglycan subunit and a truncated 43 kDa subunit, and a homodimer consisting of 2 identical 43 kDa subunits. Interacts with CSF1R. Post-translationally, N-glycosylated. O-glycosylated; contains chondroitin sulfate.

Its subcellular location is the cell membrane. The protein resides in the secreted. It is found in the extracellular space. Cytokine that plays an essential role in the regulation of survival, proliferation and differentiation of hematopoietic precursor cells, especially mononuclear phagocytes, such as macrophages and monocytes. Promotes the release of pro-inflammatory chemokines, and thereby plays an important role in innate immunity and in inflammatory processes. Plays an important role in the regulation of osteoclast proliferation and differentiation, the regulation of bone resorption, and is required for normal bone development. Required for normal male and female fertility. Promotes reorganization of the actin cytoskeleton, regulates formation of membrane ruffles, cell adhesion and cell migration. Plays a role in lipoprotein clearance. The polypeptide is Macrophage colony-stimulating factor 1 (Csf1) (Rattus norvegicus (Rat)).